The following is a 435-amino-acid chain: ATP-dependent protease ATPase subunit HslU (435 aa).

Residues isoleucine 18, 60 to 65, aspartate 248, glutamate 313, and arginine 385 contribute to the ATP site; that span reads GVGKTE.

This sequence belongs to the ClpX chaperone family. HslU subfamily. A double ring-shaped homohexamer of HslV is capped on each side by a ring-shaped HslU homohexamer. The assembly of the HslU/HslV complex is dependent on binding of ATP.

It localises to the cytoplasm. In terms of biological role, ATPase subunit of a proteasome-like degradation complex; this subunit has chaperone activity. The binding of ATP and its subsequent hydrolysis by HslU are essential for unfolding of protein substrates subsequently hydrolyzed by HslV. HslU recognizes the N-terminal part of its protein substrates and unfolds these before they are guided to HslV for hydrolysis. In Rhizobium johnstonii (strain DSM 114642 / LMG 32736 / 3841) (Rhizobium leguminosarum bv. viciae), this protein is ATP-dependent protease ATPase subunit HslU.